The chain runs to 469 residues: Light-independent protochlorophyllide reductase subunit N (469 aa).

The [4Fe-4S] cluster site is built by Cys24, Cys49, and Cys109.

It belongs to the BchN/ChlN family. Protochlorophyllide reductase is composed of three subunits; ChlL, ChlN and ChlB. Forms a heterotetramer of two ChlB and two ChlN subunits. [4Fe-4S] cluster serves as cofactor.

It catalyses the reaction chlorophyllide a + oxidized 2[4Fe-4S]-[ferredoxin] + 2 ADP + 2 phosphate = protochlorophyllide a + reduced 2[4Fe-4S]-[ferredoxin] + 2 ATP + 2 H2O. It functions in the pathway porphyrin-containing compound metabolism; chlorophyll biosynthesis (light-independent). Its function is as follows. Component of the dark-operative protochlorophyllide reductase (DPOR) that uses Mg-ATP and reduced ferredoxin to reduce ring D of protochlorophyllide (Pchlide) to form chlorophyllide a (Chlide). This reaction is light-independent. The NB-protein (ChlN-ChlB) is the catalytic component of the complex. The polypeptide is Light-independent protochlorophyllide reductase subunit N (Synechocystis sp. (strain ATCC 27184 / PCC 6803 / Kazusa)).